The sequence spans 344 residues: tRNA N6-adenosine threonylcarbamoyltransferase (344 aa).

Residues histidine 111 and histidine 115 each contribute to the Fe cation site. Residues 134–138 (LVSGG), aspartate 167, glycine 180, and asparagine 274 each bind substrate. Aspartate 302 serves as a coordination point for Fe cation.

This sequence belongs to the KAE1 / TsaD family. Fe(2+) serves as cofactor.

Its subcellular location is the cytoplasm. The catalysed reaction is L-threonylcarbamoyladenylate + adenosine(37) in tRNA = N(6)-L-threonylcarbamoyladenosine(37) in tRNA + AMP + H(+). Its function is as follows. Required for the formation of a threonylcarbamoyl group on adenosine at position 37 (t(6)A37) in tRNAs that read codons beginning with adenine. Is involved in the transfer of the threonylcarbamoyl moiety of threonylcarbamoyl-AMP (TC-AMP) to the N6 group of A37, together with TsaE and TsaB. TsaD likely plays a direct catalytic role in this reaction. The protein is tRNA N6-adenosine threonylcarbamoyltransferase of Dechloromonas aromatica (strain RCB).